A 312-amino-acid chain; its full sequence is Acetyl-coenzyme A carboxylase carboxyl transferase subunit beta (312 aa).

Positions 24 to 293 (LWIKCPDSGQ…VEHAKPAPQL (270 aa)) constitute a CoA carboxyltransferase N-terminal domain. Residues 286–312 (HAKPAPQLPPPAKPAETAEAPAVATSA) form a disordered region. The segment covering 299–312 (PAETAEAPAVATSA) has biased composition (low complexity).

It belongs to the AccD/PCCB family. In terms of assembly, acetyl-CoA carboxylase is a heterohexamer composed of biotin carboxyl carrier protein (AccB), biotin carboxylase (AccC) and two subunits each of ACCase subunit alpha (AccA) and ACCase subunit beta (AccD).

Its subcellular location is the cytoplasm. It carries out the reaction N(6)-carboxybiotinyl-L-lysyl-[protein] + acetyl-CoA = N(6)-biotinyl-L-lysyl-[protein] + malonyl-CoA. Its pathway is lipid metabolism; malonyl-CoA biosynthesis; malonyl-CoA from acetyl-CoA: step 1/1. In terms of biological role, component of the acetyl coenzyme A carboxylase (ACC) complex. Biotin carboxylase (BC) catalyzes the carboxylation of biotin on its carrier protein (BCCP) and then the CO(2) group is transferred by the transcarboxylase to acetyl-CoA to form malonyl-CoA. In Bradyrhizobium sp. (strain ORS 278), this protein is Acetyl-coenzyme A carboxylase carboxyl transferase subunit beta.